The following is a 269-amino-acid chain: tRNA pseudouridine synthase A (269 aa).

D52 acts as the Nucleophile in catalysis. Y110 contacts substrate.

The protein belongs to the tRNA pseudouridine synthase TruA family. In terms of assembly, homodimer.

It carries out the reaction uridine(38/39/40) in tRNA = pseudouridine(38/39/40) in tRNA. Functionally, formation of pseudouridine at positions 38, 39 and 40 in the anticodon stem and loop of transfer RNAs. The sequence is that of tRNA pseudouridine synthase A from Bacteroides thetaiotaomicron (strain ATCC 29148 / DSM 2079 / JCM 5827 / CCUG 10774 / NCTC 10582 / VPI-5482 / E50).